Here is a 241-residue protein sequence, read N- to C-terminus: Chloride intracellular channel protein 1 (241 aa).

A2 bears the N-acetylalanine mark. The required for insertion into the membrane stretch occupies residues 2-90 (AEEQPQVELF…EEFLEAVLCP (89 aa)). Position 13 is an N6-acetyllysine (K13). Positions 24-27 (CPFS) match the G-site motif. Residues C24 and C59 are joined by a disulfide bond. Residues 26–46 (FSQRLFMVLWLKGVTFNVTTV) traverse the membrane as a helical segment. Residues 93 to 233 (YPKLAALNPE…PDDEEIELAY (141 aa)) enclose the GST C-terminal domain. At K119 the chain carries N6-acetyllysine. At S121 the chain carries Phosphoserine. An N6-acetyllysine modification is found at K131. S156 and S211 each carry phosphoserine. Y233 is subject to Phosphotyrosine.

This sequence belongs to the chloride channel CLIC family. In terms of assembly, monomer. Homodimer (in vitro). Interacts with TRAPPC2. Dimerization requires a conformation change that leads to the exposure of a large hydrophobic surface. In vivo, this may lead to membrane insertion.

The protein localises to the nucleus. It localises to the nucleus membrane. It is found in the cytoplasm. Its subcellular location is the cell membrane. The protein resides in the endoplasmic reticulum. The catalysed reaction is L-dehydroascorbate + 2 glutathione = glutathione disulfide + L-ascorbate. It catalyses the reaction chloride(in) = chloride(out). It carries out the reaction iodide(out) = iodide(in). The enzyme catalyses thiocyanate(in) = thiocyanate(out). The catalysed reaction is nitrate(in) = nitrate(out). It catalyses the reaction bromide(in) = bromide(out). It carries out the reaction fluoride(in) = fluoride(out). Its function is as follows. In the soluble state, catalyzes glutaredoxin-like thiol disulfide exchange reactions with reduced glutathione as electron donor. Reduces selenite and dehydroascorbate and may act as an antioxidant during oxidative stress response. Can insert into membranes and form voltage-dependent multi-ion conductive channels. Membrane insertion seems to be redox-regulated and may occur only under oxidizing conditions. Involved in regulation of the cell cycle. In Oryctolagus cuniculus (Rabbit), this protein is Chloride intracellular channel protein 1 (CLIC1).